Reading from the N-terminus, the 327-residue chain is Alkanal monooxygenase beta chain (327 aa).

The protein belongs to the bacterial luciferase oxidoreductase family. As to quaternary structure, heterodimer of an alpha and a beta chain.

It carries out the reaction a long-chain fatty aldehyde + FMNH2 + O2 = a long-chain fatty acid + hnu + FMN + H2O + 2 H(+). In terms of biological role, light-emitting reaction in luminous bacteria. The specific role of the beta subunit is unknown, but it is absolutely required for bioluminescence activity. This chain is Alkanal monooxygenase beta chain (luxB), found in Photorhabdus luminescens (Xenorhabdus luminescens).